Here is a 428-residue protein sequence, read N- to C-terminus: D-amino acid dehydrogenase (428 aa).

3 to 17 (VVILGSGVVGVASAY) contacts FAD.

Belongs to the DadA oxidoreductase family. It depends on FAD as a cofactor.

The enzyme catalyses a D-alpha-amino acid + A + H2O = a 2-oxocarboxylate + AH2 + NH4(+). It functions in the pathway amino-acid degradation; D-alanine degradation; NH(3) and pyruvate from D-alanine: step 1/1. Functionally, oxidative deamination of D-amino acids. The chain is D-amino acid dehydrogenase from Burkholderia pseudomallei (strain K96243).